A 257-amino-acid chain; its full sequence is Phycoerythrobilin:ferredoxin oxidoreductase (257 aa).

Belongs to the HY2 family.

It carries out the reaction (3Z)-phycoerythrobilin + oxidized 2[4Fe-4S]-[ferredoxin] = 15,16-dihydrobiliverdin + reduced 2[4Fe-4S]-[ferredoxin] + 2 H(+). Its function is as follows. Catalyzes the two-electron reduction of the C2 and C3(1) diene system of 15,16-dihydrobiliverdin. This is Phycoerythrobilin:ferredoxin oxidoreductase (pebB) from Prochlorococcus marinus subsp. pastoris (strain CCMP1986 / NIES-2087 / MED4).